Here is a 564-residue protein sequence, read N- to C-terminus: Sphingomyelin phosphodiesterase 1 (564 aa).

The N-terminal stretch at 1-17 (MRIIYLISTVLLIYTNA) is a signal peptide. A Saposin B-type domain is found at 37–121 (FQPLCISCTG…IILPDCADPT (85 aa)). 3 disulfides stabilise this stretch: C41/C117, C44/C110, and C72/C83. Residue N151 is glycosylated (N-linked (GlcNAc...) asparagine). 2 residues coordinate Zn(2+): D165 and H167. 2 cysteine pairs are disulfide-bonded: C180–C185 and C186–C206. N221 carries an N-linked (GlcNAc...) asparagine glycan. Residues D234 and N274 each contribute to the Zn(2+) site. An intrachain disulfide couples C341 to C389. N351 carries N-linked (GlcNAc...) asparagine glycosylation. Residues H381, H415, and H417 each contribute to the Zn(2+) site. Residue N430 is glycosylated (N-linked (GlcNAc...) asparagine). Intrachain disulfides connect C538-C542 and C548-C561. N556 is a glycosylation site (N-linked (GlcNAc...) asparagine).

This sequence belongs to the acid sphingomyelinase family. The cofactor is Zn(2+).

It is found in the secreted. It catalyses the reaction a sphingomyelin + H2O = phosphocholine + an N-acylsphing-4-enine + H(+). It carries out the reaction an N-acyl-15-methylhexadecasphing-4-enine-1-phosphocholine + H2O = an N-acyl-15-methylhexadecasphing-4-enine + phosphocholine + H(+). It participates in lipid metabolism; sphingolipid metabolism. Functionally, sphingomyelin phosphodiesterase (sphingomyelinase) that converts sphingomyelin to ceramide (N-acyl-sphingoid base) and phosphocholine at acidic pH. Displays its enzymatic activity when secreted. May play distinct roles in signaling. This Caenorhabditis elegans protein is Sphingomyelin phosphodiesterase 1 (asm-1).